Reading from the N-terminus, the 141-residue chain is Hemoglobin subunit alpha-D (141 aa).

One can recognise a Globin domain in the interval 1–141 (MLTEDEKQLI…VSAVLAEKYR (141 aa)). Heme b contacts are provided by histidine 58 and histidine 87.

This sequence belongs to the globin family. Heterotetramer of two alpha-D chains and two beta chains. In terms of tissue distribution, red blood cells.

Involved in oxygen transport from the lung to the various peripheral tissues. This is Hemoglobin subunit alpha-D (HBAD) from Chelonoidis carbonarius (Red-footed tortoise).